A 207-amino-acid polypeptide reads, in one-letter code: GTP cyclohydrolase 1 (207 aa).

Zn(2+) is bound by residues Cys94, His97, and Cys167.

Belongs to the GTP cyclohydrolase I family. As to quaternary structure, toroid-shaped homodecamer, composed of two pentamers of five dimers.

It catalyses the reaction GTP + H2O = 7,8-dihydroneopterin 3'-triphosphate + formate + H(+). It participates in cofactor biosynthesis; 7,8-dihydroneopterin triphosphate biosynthesis; 7,8-dihydroneopterin triphosphate from GTP: step 1/1. This Thermobifida fusca (strain YX) protein is GTP cyclohydrolase 1.